We begin with the raw amino-acid sequence, 475 residues long: UDP-glucosyltransferase UGT13248 (475 aa).

Residues 1–17 are compositionally biased toward low complexity; sequence METTVTAVSGTTSSSVG. A disordered region spans residues 1–20; that stretch reads METTVTAVSGTTSSSVGHGA. Residues H38, S152, T299, C352, 369 to 377, and 393 to 394 contribute to the UDP-alpha-D-glucose site; these read HCGWNSTLE and DQ.

This sequence belongs to the UDP-glycosyltransferase family.

In terms of biological role, involved in the detoxification of the Fusarium mycotoxin deoxynivalenol by the transfer of glucose from UDP-D-glucose to the hydroxyl group at C-3, forming deoxynivalenol-3-O-beta-D-glucoside. The polypeptide is UDP-glucosyltransferase UGT13248 (Hordeum vulgare subsp. vulgare (Domesticated barley)).